Reading from the N-terminus, the 294-residue chain is N-acetylmuramic acid 6-phosphate etherase (294 aa).

Residues 54-217 (VIQSFEEEGR…STASMIGVGK (164 aa)) form the SIS domain. E82 functions as the Proton donor in the catalytic mechanism. The active site involves E113.

The protein belongs to the GCKR-like family. MurNAc-6-P etherase subfamily. Homodimer.

It catalyses the reaction N-acetyl-D-muramate 6-phosphate + H2O = N-acetyl-D-glucosamine 6-phosphate + (R)-lactate. It functions in the pathway amino-sugar metabolism; N-acetylmuramate degradation. Functionally, specifically catalyzes the cleavage of the D-lactyl ether substituent of MurNAc 6-phosphate, producing GlcNAc 6-phosphate and D-lactate. This is N-acetylmuramic acid 6-phosphate etherase from Bacillus cereus (strain AH820).